We begin with the raw amino-acid sequence, 104 residues long: Large ribosomal subunit protein eL30 (104 aa).

This sequence belongs to the eukaryotic ribosomal protein eL30 family.

The chain is Large ribosomal subunit protein eL30 (RPL30) from Tetrahymena thermophila (strain SB210).